Reading from the N-terminus, the 103-residue chain is Large ribosomal subunit protein uL23c (103 aa).

Belongs to the universal ribosomal protein uL23 family. In terms of assembly, part of the 50S ribosomal subunit.

The protein resides in the plastid. It is found in the chloroplast. In terms of biological role, binds to 23S rRNA. The protein is Large ribosomal subunit protein uL23c (rpl23) of Gracilaria tenuistipitata var. liui (Red alga).